The chain runs to 219 residues: Cytidylate kinase (219 aa).

10–18 (GPAAAGKST) contributes to the ATP binding site.

It belongs to the cytidylate kinase family. Type 1 subfamily.

It localises to the cytoplasm. It catalyses the reaction CMP + ATP = CDP + ADP. The catalysed reaction is dCMP + ATP = dCDP + ADP. The chain is Cytidylate kinase from Staphylococcus aureus (strain bovine RF122 / ET3-1).